Consider the following 282-residue polypeptide: Glycine betaine transport system permease protein OpuAB (282 aa).

Over 1–18 the chain is Extracellular; sequence MDRLPRIPLADIIDRFVD. Residues 19–39 traverse the membrane as a helical segment; sequence WITMTFGGFFDGIANGLAAFV. At 40 to 44 the chain is on the cytoplasmic side; the sequence is NGIVT. Residues 45–65 traverse the membrane as a helical segment; it reads GLGFIPSILLTIIFAALAWWI. Residues 66-69 lie on the Extracellular side of the membrane; it reads STRG. Residues 70 to 90 traverse the membrane as a helical segment; that stretch reads IALFTLIGFLLIDYLGYWDPM. One can recognise an ABC transmembrane type-1 domain in the interval 90 to 269; it reads MLQTLALVLT…IVAITLDRIT (180 aa). Residues 91 to 93 are Cytoplasmic-facing; that stretch reads LQT. A helical membrane pass occupies residues 94 to 114; that stretch reads LALVLTSVIISIVVGVPIGIW. At 115-137 the chain is on the extracellular side; it reads ASQKETVRRIVTPILDLMQTMPA. A helical membrane pass occupies residues 138 to 158; the sequence is FVYLLPAIFFFNIGVVPGVVA. Over 159–215 the chain is Cytoplasmic; that stretch reads SVIFAMPPTIRMTVLGIKQVPADLIEATEAFGSTTAQRLFKVQLPLATKTILAGINQ. The helical transmembrane segment at 216–236 threads the bilayer; it reads SIMLALSMVVIAAMVGAPGLG. Over 237 to 242 the chain is Extracellular; that stretch reads SEVYSA. Residues 243–263 traverse the membrane as a helical segment; the sequence is VTQLKTGVGVEAGIAIVIVAI. At 264-282 the chain is on the cytoplasmic side; the sequence is TLDRITQNIKVKKKSRGNA.

This sequence belongs to the binding-protein-dependent transport system permease family. CysTW subfamily. In terms of assembly, the complex is composed of two ATP-binding proteins (OpuAA), two transmembrane proteins (OpuAB) and a solute-binding protein (OpuAC).

It is found in the cell membrane. Functionally, involved in a multicomponent binding-protein-dependent transport system for glycine betaine; probably responsible for the translocation of the substrate across the membrane. In Bacillus subtilis (strain 168), this protein is Glycine betaine transport system permease protein OpuAB (opuAB).